Here is a 453-residue protein sequence, read N- to C-terminus: Anthocyanidin 3-O-glucosyltransferase (453 aa).

H17 functions as the Proton acceptor in the catalytic mechanism. H17 is a binding site for an anthocyanidin. D117 acts as the Charge relay in catalysis. Residue T139 participates in UDP-alpha-D-glucose binding. H148 provides a ligand contact to an anthocyanidin. UDP-alpha-D-glucose-binding residues include A331, Q333, H348, W351, N352, S353, and E356. G371 lines the an anthocyanidin pocket. The UDP-alpha-D-glucose site is built by D372 and Q373.

This sequence belongs to the UDP-glycosyltransferase family.

The catalysed reaction is an anthocyanidin + UDP-alpha-D-glucose + H(+) = an anthocyanidin 3-O-beta-D-glucoside + UDP. It carries out the reaction delphinidin + UDP-alpha-D-glucose = delphinidin 3-O-beta-D-glucoside + UDP. The enzyme catalyses pelargonidin + UDP-alpha-D-glucose = pelargonidin 3-O-beta-D-glucoside + UDP. It catalyses the reaction cyanidin + UDP-alpha-D-glucose = cyanidin 3-O-beta-D-glucoside + UDP + H(+). It participates in pigment biosynthesis; anthocyanin biosynthesis. Functionally, in the presence of other necessary color factors, this glycosylation reaction allows the accumulation of anthocyanin pigments. Anthocyanidins are the preferred substrates, while flavonols are only a minor substrate in vitro. This is Anthocyanidin 3-O-glucosyltransferase from Gentiana triflora (Clustered gentian).